The primary structure comprises 451 residues: Enolase (451 aa).

Residue Q167 coordinates (2R)-2-phosphoglycerate. Catalysis depends on E209, which acts as the Proton donor. D250, E307, and D334 together coordinate Mg(2+). (2R)-2-phosphoglycerate-binding residues include K359, R388, S389, and K410. K359 functions as the Proton acceptor in the catalytic mechanism.

The protein belongs to the enolase family. Mg(2+) serves as cofactor.

The protein resides in the cytoplasm. It localises to the secreted. The protein localises to the cell surface. The enzyme catalyses (2R)-2-phosphoglycerate = phosphoenolpyruvate + H2O. It participates in carbohydrate degradation; glycolysis; pyruvate from D-glyceraldehyde 3-phosphate: step 4/5. Its function is as follows. Catalyzes the reversible conversion of 2-phosphoglycerate (2-PG) into phosphoenolpyruvate (PEP). It is essential for the degradation of carbohydrates via glycolysis. The sequence is that of Enolase from Mesomycoplasma hyopneumoniae (strain J / ATCC 25934 / NCTC 10110) (Mycoplasma hyopneumoniae).